The following is a 124-amino-acid chain: Acidic phospholipase A2 BA2 (124 aa).

Disulfide bonds link Cys-26-Cys-116, Cys-28-Cys-44, Cys-43-Cys-95, Cys-49-Cys-124, Cys-50-Cys-88, Cys-57-Cys-81, and Cys-75-Cys-86. Ca(2+)-binding residues include Tyr-27, Gly-29, and Gly-31. The active site involves His-47. Residue Asp-48 participates in Ca(2+) binding. The active site involves Asp-89.

It belongs to the phospholipase A2 family. Group II subfamily. D49 sub-subfamily. Ca(2+) serves as cofactor. As to expression, expressed by the venom gland.

It localises to the secreted. The enzyme catalyses a 1,2-diacyl-sn-glycero-3-phosphocholine + H2O = a 1-acyl-sn-glycero-3-phosphocholine + a fatty acid + H(+). PLA2 catalyzes the calcium-dependent hydrolysis of the 2-acyl groups in 3-sn-phosphoglycerides. The polypeptide is Acidic phospholipase A2 BA2 (Gloydius halys (Chinese water mocassin)).